The sequence spans 143 residues: Crossover junction endodeoxyribonuclease Hjc (143 aa).

Mg(2+) is bound at residue Glu-12. Ser-32 is a catalytic residue. Positions 42 and 55 each coordinate Mg(2+).

The protein belongs to the Holliday junction resolvase Hjc family. In terms of assembly, homodimer. Mg(2+) serves as cofactor.

The catalysed reaction is Endonucleolytic cleavage at a junction such as a reciprocal single-stranded crossover between two homologous DNA duplexes (Holliday junction).. Its function is as follows. A structure-specific endonuclease that resolves Holliday junction (HJ) intermediates during genetic recombination. Cleaves 4-way DNA junctions introducing paired nicks in opposing strands, leaving a 5'-terminal phosphate and a 3'-terminal hydroxyl group that are subsequently ligated to produce recombinant products. In terms of biological role, hjc, Hjm (Hel308) and PINA coordinate HJ migration and cleavage of replication forks in a coordinated way. In Saccharolobus islandicus (strain REY15A) (Sulfolobus islandicus), this protein is Crossover junction endodeoxyribonuclease Hjc.